Consider the following 251-residue polypeptide: NADPH-dependent oxidoreductase (251 aa).

It belongs to the flavin oxidoreductase frp family. FMN is required as a cofactor.

Functionally, reduces FMN, organic nitro compounds and disulfide DTNB. Involved in maintenance of the cellular redox state and the disulfide stress response. The protein is NADPH-dependent oxidoreductase (nfrA) of Staphylococcus aureus (strain bovine RF122 / ET3-1).